The chain runs to 274 residues: Type II restriction enzyme HgiBI (274 aa).

The protein belongs to the TdeIII type II restriction endonuclease family.

The catalysed reaction is Endonucleolytic cleavage of DNA to give specific double-stranded fragments with terminal 5'-phosphates.. In terms of biological role, a P subtype restriction enzyme that recognizes the double-stranded sequence 5'-GGWCC-3' and cleaves after G-1. This system is less active than isoschizomeric RM.HgiEI. The chain is Type II restriction enzyme HgiBI from Herpetosiphon aurantiacus (Herpetosiphon giganteus).